Here is a 445-residue protein sequence, read N- to C-terminus: Chromosome partition protein MukF (445 aa).

A leucine-zipper region spans residues 213-241 (LSETSNTLKELQDTLQAAGDELQTQILDI).

It belongs to the MukF family. As to quaternary structure, interacts, and probably forms a ternary complex, with MukE and MukB via its C-terminal region. The complex formation is stimulated by calcium or magnesium. It is required for an interaction between MukE and MukB.

The protein resides in the cytoplasm. The protein localises to the nucleoid. Involved in chromosome condensation, segregation and cell cycle progression. May participate in facilitating chromosome segregation by condensation DNA from both sides of a centrally located replisome during cell division. Not required for mini-F plasmid partitioning. Probably acts via its interaction with MukB and MukE. Overexpression results in anucleate cells. It has a calcium binding activity. The sequence is that of Chromosome partition protein MukF from Vibrio vulnificus (strain YJ016).